The primary structure comprises 418 residues: Serine--tRNA ligase (418 aa).

231–233 (TAE) serves as a coordination point for L-serine. Residue 262–264 (RRE) coordinates ATP. Residue Glu-285 participates in L-serine binding. 349–352 (EISS) is a binding site for ATP. Ser-384 contacts L-serine.

It belongs to the class-II aminoacyl-tRNA synthetase family. Type-1 seryl-tRNA synthetase subfamily. In terms of assembly, homodimer. The tRNA molecule binds across the dimer.

It localises to the cytoplasm. It carries out the reaction tRNA(Ser) + L-serine + ATP = L-seryl-tRNA(Ser) + AMP + diphosphate + H(+). The catalysed reaction is tRNA(Sec) + L-serine + ATP = L-seryl-tRNA(Sec) + AMP + diphosphate + H(+). It functions in the pathway aminoacyl-tRNA biosynthesis; selenocysteinyl-tRNA(Sec) biosynthesis; L-seryl-tRNA(Sec) from L-serine and tRNA(Sec): step 1/1. Its function is as follows. Catalyzes the attachment of serine to tRNA(Ser). Is also able to aminoacylate tRNA(Sec) with serine, to form the misacylated tRNA L-seryl-tRNA(Sec), which will be further converted into selenocysteinyl-tRNA(Sec). The polypeptide is Serine--tRNA ligase (Coprothermobacter proteolyticus (strain ATCC 35245 / DSM 5265 / OCM 4 / BT)).